The primary structure comprises 293 residues: 5'-3' exoribonuclease Rnm (293 aa).

The Mn(2+) site is built by H17, H19, D24, H49, E76, H87, H202, D259, and H261.

It belongs to the PHP family. TrpH/YciV subfamily. It depends on Mn(2+) as a cofactor.

The catalysed reaction is a ribonucleoside 3',5'-bisphosphate + H2O = a ribonucleoside 5'-phosphate + phosphate. Functionally, exoribonuclease that catalyzes the last steps of 5S, 16S and 23S rRNA 5'-end maturation. Removes 3 nucleotides (nt) from the 5' end of 5S, 16S and 23S rRNA precursors to generate the mature 5' ends. 5S and 23S rRNA maturation occurs more efficiently and accurately on ribosomal particles as compared to free RNA. Efficiently catalyzes the hydrolysis of the 3'-phosphate from 3',5'-bis-phosphonucleotides as well as the successive hydrolysis of 5'-phosphomononucleotides from the 5'-end of short pieces of RNA and DNA, with no specificity toward the identity of the nucleotide base. Is more efficient at hydrolyzing RNA oligonucleotides than DNA oligonucleotides. This enzyme can also hydrolyze annealed DNA duplexes, albeit at a catalytic efficiency lower than that of the corresponding single-stranded oligonucleotides. In Salmonella typhimurium (strain LT2 / SGSC1412 / ATCC 700720), this protein is 5'-3' exoribonuclease Rnm.